We begin with the raw amino-acid sequence, 406 residues long: MEGMRRPTPTVYVGRVPIGGAHPIAVQSMTNTPTRDVEATTAQVLELHRAGSEIVRLTVNDEEAAKAVPEIKRRLLAEGVEVPLVGDFHFNGHLLLRKYPKMAEALDKFRINPGTLGRGRHKDEHFAEMIRIAMDLGKPVRIGANWGSLDPALLTELMDRNASRPEPKSAHEVVLEALVESAVRAYEAALEMGLGEDKLVLSAKVSKARDLVWVYRELARRTQAPLHLGLTEAGMGVKGIVASAAALAPLLLEGIGDTIRVSLTPSPKEPRTKEVEVAQEILQALGLRAFAPEVTSCPGCGRTTSTFFQELAEEVSRRLKERLPEWRARYPGVEELKVAVMGCVVNGPGESKHAHIGISLPGAGEEPKAPVYADGKLLTILKGEGIAEEFLRLVEDYVKTRFAPKA.

Positions 297, 300, 343, and 350 each coordinate [4Fe-4S] cluster.

The protein belongs to the IspG family. In terms of assembly, homodimer. The cofactor is [4Fe-4S] cluster.

It catalyses the reaction (2E)-4-hydroxy-3-methylbut-2-enyl diphosphate + oxidized [flavodoxin] + H2O + 2 H(+) = 2-C-methyl-D-erythritol 2,4-cyclic diphosphate + reduced [flavodoxin]. The protein operates within isoprenoid biosynthesis; isopentenyl diphosphate biosynthesis via DXP pathway; isopentenyl diphosphate from 1-deoxy-D-xylulose 5-phosphate: step 5/6. Functionally, converts 2C-methyl-D-erythritol 2,4-cyclodiphosphate (ME-2,4cPP) into 1-hydroxy-2-methyl-2-(E)-butenyl 4-diphosphate. The polypeptide is 4-hydroxy-3-methylbut-2-en-1-yl diphosphate synthase (flavodoxin) (Thermus thermophilus (strain ATCC BAA-163 / DSM 7039 / HB27)).